The chain runs to 288 residues: Phosphatidylserine decarboxylase proenzyme (288 aa).

Active-site charge relay system; for autoendoproteolytic cleavage activity residues include D88, H145, and S248. Catalysis depends on S248, which acts as the Schiff-base intermediate with substrate; via pyruvic acid; for decarboxylase activity. A Pyruvic acid (Ser); by autocatalysis modification is found at S248.

It belongs to the phosphatidylserine decarboxylase family. PSD-B subfamily. Prokaryotic type I sub-subfamily. In terms of assembly, heterodimer of a large membrane-associated beta subunit and a small pyruvoyl-containing alpha subunit. Pyruvate is required as a cofactor. Post-translationally, is synthesized initially as an inactive proenzyme. Formation of the active enzyme involves a self-maturation process in which the active site pyruvoyl group is generated from an internal serine residue via an autocatalytic post-translational modification. Two non-identical subunits are generated from the proenzyme in this reaction, and the pyruvate is formed at the N-terminus of the alpha chain, which is derived from the carboxyl end of the proenzyme. The autoendoproteolytic cleavage occurs by a canonical serine protease mechanism, in which the side chain hydroxyl group of the serine supplies its oxygen atom to form the C-terminus of the beta chain, while the remainder of the serine residue undergoes an oxidative deamination to produce ammonia and the pyruvoyl prosthetic group on the alpha chain. During this reaction, the Ser that is part of the protease active site of the proenzyme becomes the pyruvoyl prosthetic group, which constitutes an essential element of the active site of the mature decarboxylase.

The protein resides in the cell membrane. The enzyme catalyses a 1,2-diacyl-sn-glycero-3-phospho-L-serine + H(+) = a 1,2-diacyl-sn-glycero-3-phosphoethanolamine + CO2. It functions in the pathway phospholipid metabolism; phosphatidylethanolamine biosynthesis; phosphatidylethanolamine from CDP-diacylglycerol: step 2/2. Its function is as follows. Catalyzes the formation of phosphatidylethanolamine (PtdEtn) from phosphatidylserine (PtdSer). This Azoarcus sp. (strain BH72) protein is Phosphatidylserine decarboxylase proenzyme.